Consider the following 426-residue polypeptide: Glutamate-1-semialdehyde 2,1-aminomutase (426 aa).

Residue K265 is modified to N6-(pyridoxal phosphate)lysine.

This sequence belongs to the class-III pyridoxal-phosphate-dependent aminotransferase family. HemL subfamily. In terms of assembly, homodimer. Requires pyridoxal 5'-phosphate as cofactor.

Its subcellular location is the cytoplasm. The catalysed reaction is (S)-4-amino-5-oxopentanoate = 5-aminolevulinate. The protein operates within porphyrin-containing compound metabolism; protoporphyrin-IX biosynthesis; 5-aminolevulinate from L-glutamyl-tRNA(Glu): step 2/2. The polypeptide is Glutamate-1-semialdehyde 2,1-aminomutase (Actinobacillus pleuropneumoniae serotype 5b (strain L20)).